The primary structure comprises 451 residues: LisH domain-containing protein C1711.05 (451 aa).

The region spanning 6–38 is the LisH domain; the sequence is MKSKVCPLIYHFLQENGYVKTAQTFLKETGDKD. The tract at residues 59–394 is disordered; the sequence is PYLTTEDVGK…VGDPSQWDFA (336 aa). Basic and acidic residues predominate over residues 73–98; sequence KESLEKSNDDSQKISKKGAPPEKAHS. Residues 99–120 show a composition bias toward low complexity; the sequence is SSEASGSGSSSDESDSSSSESE. A compositionally biased stretch (acidic residues) spans 135 to 145; that stretch reads SESESSSEDSD. Over residues 146 to 174 the composition is skewed to low complexity; it reads SSSSSSDSESESSSEGSDSSSSSSSSESE. The segment covering 189–199 has biased composition (acidic residues); it reads SESESSSEDSD. Positions 200 to 228 are enriched in low complexity; it reads SSSSSSDSESESSSEGSDSSSSSSSSESE. Acidic residues-rich tracts occupy residues 243–253 and 278–300; these read SESESSSEDSD and DSED…EDSD. Residues 301–319 are compositionally biased toward low complexity; the sequence is STSSSSDSDSSSSSEDGNS. Positions 320 to 332 are enriched in polar residues; it reads NTDTTTSGEVSAQ. Low complexity predominate over residues 333–343; the sequence is SSTNSTSSEES. The segment covering 344–365 has biased composition (basic and acidic residues); that stretch reads TSVKDEDSSKIHDKSLKRKHED. Positions 369-380 are enriched in low complexity; that stretch reads STSTKSSRTTKT.

It localises to the nucleus. It is found in the nucleolus. This chain is LisH domain-containing protein C1711.05, found in Schizosaccharomyces pombe (strain 972 / ATCC 24843) (Fission yeast).